The chain runs to 256 residues: MKKFLTAFLVAFTGLFLVACQNTKTENNASNEANTTLTLKVGTAPNYKPFNFKQDSKLTGFDTDLIEEIAKKNGIEIVWVETNFDGLIPALKSGKIDMIASAMSATDERRQSVDFTKPYYMSKNLYLKLKNNDSLQTKNDLEGKKIGVQLGTLQENTAKAIKNAQVQSNKDLNIAVLALKNNKIDAIVADQDTAKGFLAENPELVSFYQETDGGEGFSFAFDKNKQKDIIEIFNKGIDEAKTDGFYDTLIKKYELE.

Residues Met1–Ala19 form the signal peptide. Cys20 carries the N-palmitoyl cysteine lipid modification. Cys20 carries the S-diacylglycerol cysteine lipid modification.

Belongs to the bacterial solute-binding protein 3 family.

It is found in the cell membrane. In terms of biological role, involved in histidine transport. The chain is Probable histidine-binding protein (hisJ) from Campylobacter jejuni subsp. jejuni serotype O:2 (strain ATCC 700819 / NCTC 11168).